Consider the following 644-residue polypeptide: 3D-(3,5/4)-trihydroxycyclohexane-1,2-dione hydrolase (644 aa).

E65 is a thiamine diphosphate binding site. Residues 442–522 (SLPGDLQRMW…INVLLFDNSG (81 aa)) are thiamine pyrophosphate binding. Mg(2+) contacts are provided by D493 and N520.

Belongs to the TPP enzyme family. It depends on Mg(2+) as a cofactor. Thiamine diphosphate serves as cofactor.

The enzyme catalyses 3D-3,5/4-trihydroxycyclohexane-1,2-dione + H2O = 5-deoxy-D-glucuronate + H(+). Its pathway is polyol metabolism; myo-inositol degradation into acetyl-CoA; acetyl-CoA from myo-inositol: step 3/7. In terms of biological role, involved in the cleavage of the C1-C2 bond of 3D-(3,5/4)-trihydroxycyclohexane-1,2-dione (THcHDO) to yield 5-deoxy-glucuronate (5DG). The protein is 3D-(3,5/4)-trihydroxycyclohexane-1,2-dione hydrolase of Bacillus cereus (strain AH820).